A 421-amino-acid polypeptide reads, in one-letter code: Forkhead box protein fkh-4 (421 aa).

A DNA-binding region (fork-head) is located at residues 118–218 (RPPISYVALC…SDADFDFFRK (101 aa)).

It localises to the nucleus. Its function is as follows. Transcription factor. Regulates expression of a class of small RNAs, known as 21U-RNAs, perhaps acting redundantly with fkh-3 and fkh-5. This Caenorhabditis elegans protein is Forkhead box protein fkh-4.